We begin with the raw amino-acid sequence, 1108 residues long: Retinal guanylyl cyclase 2 (1108 aa).

The signal sequence occupies residues 1–50; that stretch reads MFLGPWPFSRLLSWFAISSRLSGQHGLPSSKFLRCLCLLALLPLLRWGQA. Over 51-469 the chain is Extracellular; that stretch reads LPYKIGVIGP…CQGGIDPALA (419 aa). The cysteines at positions 104 and 132 are disulfide-linked. Residues 470–490 traverse the membrane as a helical segment; the sequence is MMVCFALLIALLSINGFAYFI. The Cytoplasmic portion of the chain corresponds to 491–1108; the sequence is RRRINKIQLI…AERQLVRNKP (618 aa). The 281-residue stretch at 532–812 folds into the Protein kinase domain; it reads FQIISEVQSG…DEIFNQFKTF (281 aa). One can recognise a Guanylate cyclase domain in the interval 884 to 1014; that stretch reads TLYFSDIVGF…DTVNTASRME (131 aa).

Belongs to the adenylyl cyclase class-4/guanylyl cyclase family. In terms of assembly, homodimer. Interacts with RD3; promotes the exit of GUCY2F from the endoplasmic reticulum and its trafficking to the photoreceptor outer segments. There are 9 conserved cysteine residues in sensory guanylate cyclases, 6 in the extracellular domain, which may be involved in intra- or interchain disulfide bonds. As to expression, retina.

The protein localises to the membrane. The protein resides in the photoreceptor outer segment membrane. It carries out the reaction GTP = 3',5'-cyclic GMP + diphosphate. Activated by GUCA1B when free calcium ions concentration is low, and inhibited by GUCA1B when free calcium ions concentration is high. Inhibited by RD3. Responsible for the synthesis of cyclic GMP (cGMP) in rods and cones of photoreceptors. Plays an essential role in phototransduction, by mediating cGMP replenishment. May also participate in the trafficking of membrane-asociated proteins to the photoreceptor outer segment membrane. This is Retinal guanylyl cyclase 2 from Mus musculus (Mouse).